Here is a 344-residue protein sequence, read N- to C-terminus: MKMKLFQTICRQLRSSKFSVESAALVAFSTSSYSCGRKKKVNPYEEVDQEKYSNLVQSVLSSRGVAQTPGSVEEDALLCGPVSKHKLPNQGEDRRVPQNWFPIFNPERSDKPNASDPSVPLKIPLQRNVIPSVTRVLQQTMTKQQVFLLERWKQRMILELGEDGFKEYTSNVFLQGKRFHEALESILSPQETLKERDENLLKSGYIESVQHILKDVSGVRALESAVQHETLNYIGLLDCVAEYQGKLCVIDWKTSEKPKPFIQSTFDNPLQVVAYMGAMNHDTNYSFQVQCGLIVVAYKDGSPAHPHFMDAELCSQYWTKWLLRLEEYTEKKKNQNIQKPEYSE.

Residues aspartate 238, aspartate 251, and lysine 253 contribute to the active site. Serine 343 carries the phosphoserine modification.

It belongs to the MGME1 family.

Its subcellular location is the mitochondrion. In terms of biological role, metal-dependent single-stranded DNA (ssDNA) exonuclease involved in mitochondrial genome maintenance. Has preference for 5'-3' exonuclease activity but is also capable of endonuclease activity on linear substrates. Necessary for maintenance of proper 7S DNA levels. Probably involved in mitochondrial DNA (mtDNA) repair, possibly via the processing of displaced DNA containing Okazaki fragments during RNA-primed DNA synthesis on the lagging strand or via processing of DNA flaps during long-patch base excision repair. Specifically binds 5-hydroxymethylcytosine (5hmC)-containing DNA in stem cells. This chain is Mitochondrial genome maintenance exonuclease 1, found in Homo sapiens (Human).